The sequence spans 348 residues: Dihydroorotase (348 aa).

Zn(2+)-binding residues include His14 and His16. Substrate-binding positions include 16–18 and Asn42; that span reads HLR. The Zn(2+) site is built by Lys100, His137, and His175. At Lys100 the chain carries N6-carboxylysine. His137 is a binding site for substrate. Leu220 provides a ligand contact to substrate. Residue Asp248 coordinates Zn(2+). Residue Asp248 is part of the active site. Substrate contacts are provided by His252 and Ala264.

It belongs to the metallo-dependent hydrolases superfamily. DHOase family. Class II DHOase subfamily. As to quaternary structure, homodimer. The cofactor is Zn(2+).

It catalyses the reaction (S)-dihydroorotate + H2O = N-carbamoyl-L-aspartate + H(+). It functions in the pathway pyrimidine metabolism; UMP biosynthesis via de novo pathway; (S)-dihydroorotate from bicarbonate: step 3/3. Catalyzes the reversible cyclization of carbamoyl aspartate to dihydroorotate. This chain is Dihydroorotase, found in Pseudomonas putida (strain ATCC 47054 / DSM 6125 / CFBP 8728 / NCIMB 11950 / KT2440).